We begin with the raw amino-acid sequence, 310 residues long: Thiamine-monophosphate kinase (310 aa).

Mg(2+) contacts are provided by aspartate 24, threonine 38, and aspartate 39. Aspartate 46 contacts substrate. Aspartate 67 and aspartate 115 together coordinate Mg(2+). Residues 114–115 (GD) and arginine 138 each bind ATP. Mg(2+) is bound at residue aspartate 203. Serine 205 is a binding site for ATP. A Mg(2+)-binding site is contributed by aspartate 206. Substrate contacts are provided by glutamate 251 and tryptophan 306.

It belongs to the thiamine-monophosphate kinase family.

The enzyme catalyses thiamine phosphate + ATP = thiamine diphosphate + ADP. Its pathway is cofactor biosynthesis; thiamine diphosphate biosynthesis; thiamine diphosphate from thiamine phosphate: step 1/1. Its function is as follows. Catalyzes the ATP-dependent phosphorylation of thiamine-monophosphate (TMP) to form thiamine-pyrophosphate (TPP), the active form of vitamin B1. This chain is Thiamine-monophosphate kinase, found in Nitrosopumilus maritimus (strain SCM1).